A 64-amino-acid chain; its full sequence is Translation machinery-associated protein 7B (64 aa).

Positions 1–38 (MSSHEGGKKKALKQPKKQAKEMDEEEKAFKQKQKEEQK) are disordered. The span at 27–38 (KAFKQKQKEEQK) shows a compositional bias: basic and acidic residues.

This sequence belongs to the TMA7 family.

The polypeptide is Translation machinery-associated protein 7B (Homo sapiens (Human)).